The chain runs to 611 residues: Dihydroxy-acid dehydratase (611 aa).

Asp-81 provides a ligand contact to Mg(2+). Cys-122 contacts [2Fe-2S] cluster. Mg(2+) contacts are provided by Asp-123 and Lys-124. At Lys-124 the chain carries N6-carboxylysine. Cys-195 is a [2Fe-2S] cluster binding site. A Mg(2+)-binding site is contributed by Glu-491. Catalysis depends on Ser-517, which acts as the Proton acceptor.

It belongs to the IlvD/Edd family. Homodimer. [2Fe-2S] cluster is required as a cofactor. Mg(2+) serves as cofactor.

It carries out the reaction (2R)-2,3-dihydroxy-3-methylbutanoate = 3-methyl-2-oxobutanoate + H2O. The catalysed reaction is (2R,3R)-2,3-dihydroxy-3-methylpentanoate = (S)-3-methyl-2-oxopentanoate + H2O. The protein operates within amino-acid biosynthesis; L-isoleucine biosynthesis; L-isoleucine from 2-oxobutanoate: step 3/4. It participates in amino-acid biosynthesis; L-valine biosynthesis; L-valine from pyruvate: step 3/4. In terms of biological role, functions in the biosynthesis of branched-chain amino acids. Catalyzes the dehydration of (2R,3R)-2,3-dihydroxy-3-methylpentanoate (2,3-dihydroxy-3-methylvalerate) into 2-oxo-3-methylpentanoate (2-oxo-3-methylvalerate) and of (2R)-2,3-dihydroxy-3-methylbutanoate (2,3-dihydroxyisovalerate) into 2-oxo-3-methylbutanoate (2-oxoisovalerate), the penultimate precursor to L-isoleucine and L-valine, respectively. In Actinobacillus pleuropneumoniae serotype 3 (strain JL03), this protein is Dihydroxy-acid dehydratase.